Consider the following 163-residue polypeptide: NADPH-dependent 7-cyano-7-deazaguanine reductase (163 aa).

Residues 1–10 show a composition bias toward basic residues; it reads MSKPPRRSPR. The interval 1–23 is disordered; the sequence is MSKPPRRSPRKPTPASPELQLGH. The active-site Thioimide intermediate is cysteine 61. The active-site Proton donor is the aspartate 68. Residues 83-85 and 102-103 each bind substrate; these read LES and HE.

The protein belongs to the GTP cyclohydrolase I family. QueF type 1 subfamily.

The protein localises to the cytoplasm. It carries out the reaction 7-aminomethyl-7-carbaguanine + 2 NADP(+) = 7-cyano-7-deazaguanine + 2 NADPH + 3 H(+). Its pathway is tRNA modification; tRNA-queuosine biosynthesis. Functionally, catalyzes the NADPH-dependent reduction of 7-cyano-7-deazaguanine (preQ0) to 7-aminomethyl-7-deazaguanine (preQ1). The sequence is that of NADPH-dependent 7-cyano-7-deazaguanine reductase from Rhodopseudomonas palustris (strain BisA53).